A 1059-amino-acid polypeptide reads, in one-letter code: Carbamoyl phosphate synthase large chain (1059 aa).

The tract at residues 1-401 (MPKRTDIKKI…SLLKACRSLE (401 aa)) is carboxyphosphate synthetic domain. The ATP site is built by R129, R169, G175, G176, R208, I210, E215, G241, I242, H243, Q284, and E298. Residues 133 to 327 (KQLMEDLEQP…IAKLAAKIAV (195 aa)) enclose the ATP-grasp 1 domain. Mg(2+) contacts are provided by Q284, E298, and N300. Residues Q284, E298, and N300 each contribute to the Mn(2+) site. An oligomerization domain region spans residues 402–546 (IGVYHNEMPE…YSTYEWENES (145 aa)). The tract at residues 547-929 (IKSEKESVIV…ALYKAFEASY (383 aa)) is carbamoyl phosphate synthetic domain. An ATP-grasp 2 domain is found at 671-861 (EQALKDLNIP…MAQIATKLIL (191 aa)). Positions 707, 746, 748, 752, 777, 778, 779, 780, 820, and 832 each coordinate ATP. Q820, E832, and N834 together coordinate Mg(2+). The Mn(2+) site is built by Q820, E832, and N834. One can recognise an MGS-like domain in the interval 930-1059 (FHLPAFGNVI…ESRGFITQAI (130 aa)). The tract at residues 930–1059 (FHLPAFGNVI…ESRGFITQAI (130 aa)) is allosteric domain.

Belongs to the CarB family. As to quaternary structure, composed of two chains; the small (or glutamine) chain promotes the hydrolysis of glutamine to ammonia, which is used by the large (or ammonia) chain to synthesize carbamoyl phosphate. Tetramer of heterodimers (alpha,beta)4. It depends on Mg(2+) as a cofactor. Mn(2+) is required as a cofactor.

It catalyses the reaction hydrogencarbonate + L-glutamine + 2 ATP + H2O = carbamoyl phosphate + L-glutamate + 2 ADP + phosphate + 2 H(+). The catalysed reaction is hydrogencarbonate + NH4(+) + 2 ATP = carbamoyl phosphate + 2 ADP + phosphate + 2 H(+). The protein operates within amino-acid biosynthesis; L-arginine biosynthesis; carbamoyl phosphate from bicarbonate: step 1/1. Its pathway is pyrimidine metabolism; UMP biosynthesis via de novo pathway; (S)-dihydroorotate from bicarbonate: step 1/3. Functionally, large subunit of the glutamine-dependent carbamoyl phosphate synthetase (CPSase). CPSase catalyzes the formation of carbamoyl phosphate from the ammonia moiety of glutamine, carbonate, and phosphate donated by ATP, constituting the first step of 2 biosynthetic pathways, one leading to arginine and/or urea and the other to pyrimidine nucleotides. The large subunit (synthetase) binds the substrates ammonia (free or transferred from glutamine from the small subunit), hydrogencarbonate and ATP and carries out an ATP-coupled ligase reaction, activating hydrogencarbonate by forming carboxy phosphate which reacts with ammonia to form carbamoyl phosphate. This Streptococcus mutans serotype c (strain ATCC 700610 / UA159) protein is Carbamoyl phosphate synthase large chain.